Consider the following 565-residue polypeptide: Phosphomethylpyrimidine synthase (565 aa).

Substrate-binding positions include asparagine 201, methionine 230, tyrosine 259, histidine 295, 315-317 (SRG), 356-359 (DGLR), and glutamate 395. Histidine 399 contributes to the Zn(2+) binding site. Tyrosine 422 is a binding site for substrate. Histidine 463 lines the Zn(2+) pocket. Cysteine 543, cysteine 546, and cysteine 551 together coordinate [4Fe-4S] cluster.

This sequence belongs to the ThiC family. In terms of assembly, homodimer. It depends on [4Fe-4S] cluster as a cofactor.

It carries out the reaction 5-amino-1-(5-phospho-beta-D-ribosyl)imidazole + S-adenosyl-L-methionine = 4-amino-2-methyl-5-(phosphooxymethyl)pyrimidine + CO + 5'-deoxyadenosine + formate + L-methionine + 3 H(+). The protein operates within cofactor biosynthesis; thiamine diphosphate biosynthesis. Its function is as follows. Catalyzes the synthesis of the hydroxymethylpyrimidine phosphate (HMP-P) moiety of thiamine from aminoimidazole ribotide (AIR) in a radical S-adenosyl-L-methionine (SAM)-dependent reaction. The chain is Phosphomethylpyrimidine synthase from Ehrlichia canis (strain Jake).